Here is a 448-residue protein sequence, read N- to C-terminus: MGSKFHAFMYPWFGFGHMIPYLHLANKLAEKGHRVTFFLPKKAHKQLQPLNLFPDSIVFEPLTLPPVDGLPFGAETASDLPNSTKKPIFVAMDLLRDQIEAKVRALKPDLIFFDFVHWVPEMAEEFGIKSVNYQIISAACVAMVLAPRAELGFPPPDYPLSKVALRGHEANVCSLFANSHELFGLITKGLKNCDVVSIRTCVELEGKLCGFIEKECQKKLLLTGPMLPEPQNKSGKFLEDRWNHWLNGFEPGSVVFCAFGTQFFFEKDQFQEFCLGMELMGLPFLISVMPPKGSPTVQEALPKGFEERVKKHGIVWEGWLEQPLILSHPSVGCFVNHCGFGSMWESLVSDCQIVFIPQLADQVLITRLLTEELEVSVKVQREDSGWFSKEDLRDTVKSVMDIDSEIGNLVKRNHKKLKETLVSPGLLSGYADKFVEALEIEVNNTKFS.

UDP-alpha-D-glucose-binding positions include threonine 261, 320–322 (LEQ), 337–345 (HCGFGSMWE), and 359–362 (LADQ).

This sequence belongs to the UDP-glycosyltransferase family.

The chain is UDP-glycosyltransferase 79B5 (UGT79B5) from Arabidopsis thaliana (Mouse-ear cress).